Reading from the N-terminus, the 419-residue chain is Hyaluronidase-3 (419 aa).

An N-terminal signal peptide occupies residues 1–16 (MTMQLGLALVLGVAMC). Disulfide bonds link C42/C331, C205/C220, C356/C367, C361/C395, and C397/C406. N-linked (GlcNAc...) asparagine glycosylation is present at N69. The Proton donor role is filled by E129. Residue N215 is glycosylated (N-linked (GlcNAc...) asparagine). Positions 352-407 (AAMACSHQRCHGHGRCAWQDPGQLKVFLHLHPGGSPGAWESFSCRCYWGWAGPTCQ) constitute an EGF-like domain.

This sequence belongs to the glycosyl hydrolase 56 family. N-glycosylated. As to expression, highly expressed in bladder, spleen and liver. Expressed at low levels in the kidney.

Its subcellular location is the secreted. It is found in the cell membrane. The protein resides in the cytoplasmic vesicle. The protein localises to the secretory vesicle. It localises to the acrosome. Its subcellular location is the endoplasmic reticulum. It is found in the early endosome. It catalyses the reaction Random hydrolysis of (1-&gt;4)-linkages between N-acetyl-beta-D-glucosamine and D-glucuronate residues in hyaluronate.. In terms of biological role, facilitates sperm penetration into the layer of cumulus cells surrounding the egg by digesting hyaluronic acid. Involved in induction of the acrosome reaction in the sperm. Involved in follicular atresia, the breakdown of immature ovarian follicles that are not selected to ovulate. Induces ovarian granulosa cell apoptosis, possibly via apoptotic signaling pathway involving CASP8 and CASP3 activation, and poly(ADP-ribose) polymerase (PARP) cleavage. Has no hyaluronidase activity in embryonic fibroblasts in vitro. Has no hyaluronidase activity in granulosa cells in vitro. This Sus scrofa (Pig) protein is Hyaluronidase-3 (HYAL3).